The chain runs to 158 residues: MNKPKNSPARKMIAENRKARFNFEILDTLEAGLVLTGTEVKSLRANQANIAESYASFEDGEFWLINSYIPEYTQGNRFNHEPRRLRKLLVSRWEMSRLFNSVSREGMTVVPLKLYFNDRGRAKLELALARGKKTHDKRETEKKRDWNREKARLLRDRG.

Positions 131–158 are disordered; that stretch reads GKKTHDKRETEKKRDWNREKARLLRDRG. Positions 136-158 are enriched in basic and acidic residues; sequence DKRETEKKRDWNREKARLLRDRG.

The protein belongs to the SmpB family.

It localises to the cytoplasm. Functionally, required for rescue of stalled ribosomes mediated by trans-translation. Binds to transfer-messenger RNA (tmRNA), required for stable association of tmRNA with ribosomes. tmRNA and SmpB together mimic tRNA shape, replacing the anticodon stem-loop with SmpB. tmRNA is encoded by the ssrA gene; the 2 termini fold to resemble tRNA(Ala) and it encodes a 'tag peptide', a short internal open reading frame. During trans-translation Ala-aminoacylated tmRNA acts like a tRNA, entering the A-site of stalled ribosomes, displacing the stalled mRNA. The ribosome then switches to translate the ORF on the tmRNA; the nascent peptide is terminated with the 'tag peptide' encoded by the tmRNA and targeted for degradation. The ribosome is freed to recommence translation, which seems to be the essential function of trans-translation. The polypeptide is SsrA-binding protein (Brucella ovis (strain ATCC 25840 / 63/290 / NCTC 10512)).